Here is an 873-residue protein sequence, read N- to C-terminus: uncharacterized protein (873 aa).

Disordered stretches follow at residues 1–24 (MSNK…SMSK), 175–251 (SSAV…TSIS), 375–423 (PSRH…AKKP), 506–540 (DSES…ATRS), 568–592 (DQSS…APEY), 662–773 (ANDS…TSQI), and 822–855 (ANPY…EEPI). Residues 211 to 225 (KDSDRSQTKNTHEET) are compositionally biased toward basic and acidic residues. The span at 376–385 (SRHHSHRKKE) shows a compositional bias: basic residues. Residues 574–586 (PGRHFGKTGRSHF) are compositionally biased toward basic residues. Residues 665–686 (SPNSSESLESLNNQSYSSSPYS) show a composition bias toward low complexity. Polar residues predominate over residues 698–740 (QSLNDSPQTSDFKASNLNDSSSNVHSIFQTRETTSPSVQNKTP). The span at 743–755 (YHRELKSSKDGHE) shows a compositional bias: basic and acidic residues. Residues 758 to 773 (SPLVSSSPSGSFTSQI) are compositionally biased toward low complexity. Over residues 823 to 855 (NPYSTNNDGNPSNNTSDVEVNETSMNDNSEEPI) the composition is skewed to polar residues.

It localises to the cytoplasm. It is found in the vacuole membrane. This is an uncharacterized protein from Schizosaccharomyces pombe (strain 972 / ATCC 24843) (Fission yeast).